A 122-amino-acid polypeptide reads, in one-letter code: Small ribosomal subunit protein uS13 (122 aa).

Positions Arg-93 to Lys-122 are disordered.

Belongs to the universal ribosomal protein uS13 family. Part of the 30S ribosomal subunit. Forms a loose heterodimer with protein S19. Forms two bridges to the 50S subunit in the 70S ribosome.

In terms of biological role, located at the top of the head of the 30S subunit, it contacts several helices of the 16S rRNA. In the 70S ribosome it contacts the 23S rRNA (bridge B1a) and protein L5 of the 50S subunit (bridge B1b), connecting the 2 subunits; these bridges are implicated in subunit movement. Contacts the tRNAs in the A and P-sites. This is Small ribosomal subunit protein uS13 from Micrococcus luteus (strain ATCC 4698 / DSM 20030 / JCM 1464 / CCM 169 / CCUG 5858 / IAM 1056 / NBRC 3333 / NCIMB 9278 / NCTC 2665 / VKM Ac-2230) (Micrococcus lysodeikticus).